The primary structure comprises 364 residues: tRNA(Met) cytidine acetate ligase (364 aa).

Residues 7 to 20 (IAEF…HKYL), glycine 96, asparagine 152, and arginine 175 contribute to the ATP site.

It belongs to the TmcAL family.

Its subcellular location is the cytoplasm. It catalyses the reaction cytidine(34) in elongator tRNA(Met) + acetate + ATP = N(4)-acetylcytidine(34) in elongator tRNA(Met) + AMP + diphosphate. Functionally, catalyzes the formation of N(4)-acetylcytidine (ac(4)C) at the wobble position of elongator tRNA(Met), using acetate and ATP as substrates. First activates an acetate ion to form acetyladenylate (Ac-AMP) and then transfers the acetyl group to tRNA to form ac(4)C34. In Streptococcus sanguinis (strain SK36), this protein is tRNA(Met) cytidine acetate ligase.